The sequence spans 588 residues: Sulfite reductase [NADPH] hemoprotein beta-component (588 aa).

Positions 1–10 (MSDKKQKGLE) are enriched in basic and acidic residues. The disordered stretch occupies residues 1–20 (MSDKKQKGLEWQDNPLSDNE). Cys-443, Cys-449, Cys-488, and Cys-492 together coordinate [4Fe-4S] cluster. Cys-492 lines the siroheme pocket.

Belongs to the nitrite and sulfite reductase 4Fe-4S domain family. In terms of assembly, alpha(8)-beta(8). The alpha component is a flavoprotein, the beta component is a hemoprotein. The cofactor is siroheme. Requires [4Fe-4S] cluster as cofactor.

It catalyses the reaction hydrogen sulfide + 3 NADP(+) + 3 H2O = sulfite + 3 NADPH + 4 H(+). Its pathway is sulfur metabolism; hydrogen sulfide biosynthesis; hydrogen sulfide from sulfite (NADPH route): step 1/1. In terms of biological role, component of the sulfite reductase complex that catalyzes the 6-electron reduction of sulfite to sulfide. This is one of several activities required for the biosynthesis of L-cysteine from sulfate. This is Sulfite reductase [NADPH] hemoprotein beta-component from Mannheimia succiniciproducens (strain KCTC 0769BP / MBEL55E).